The chain runs to 134 residues: Holo-[acyl-carrier-protein] synthase (134 aa).

Mg(2+) contacts are provided by D8 and E57.

This sequence belongs to the P-Pant transferase superfamily. AcpS family. Mg(2+) is required as a cofactor.

Its subcellular location is the cytoplasm. The catalysed reaction is apo-[ACP] + CoA = holo-[ACP] + adenosine 3',5'-bisphosphate + H(+). Functionally, transfers the 4'-phosphopantetheine moiety from coenzyme A to a Ser of acyl-carrier-protein. The chain is Holo-[acyl-carrier-protein] synthase from Roseobacter denitrificans (strain ATCC 33942 / OCh 114) (Erythrobacter sp. (strain OCh 114)).